Reading from the N-terminus, the 548-residue chain is Chaperonin GroEL (548 aa).

ATP contacts are provided by residues 30 to 33 (TLGP), lysine 51, 87 to 91 (DGTTT), glycine 415, 479 to 481 (NAA), and aspartate 495.

Belongs to the chaperonin (HSP60) family. As to quaternary structure, forms a cylinder of 14 subunits composed of two heptameric rings stacked back-to-back. Interacts with the co-chaperonin GroES.

It is found in the cytoplasm. The enzyme catalyses ATP + H2O + a folded polypeptide = ADP + phosphate + an unfolded polypeptide.. Its function is as follows. Together with its co-chaperonin GroES, plays an essential role in assisting protein folding. The GroEL-GroES system forms a nano-cage that allows encapsulation of the non-native substrate proteins and provides a physical environment optimized to promote and accelerate protein folding. The chain is Chaperonin GroEL from Pectobacterium carotovorum subsp. carotovorum (strain PC1).